The primary structure comprises 423 residues: F-box/LRR-repeat protein 2 (423 aa).

Residues 9 to 55 (GLINKKLPKELLLRIFSFLDIVTLCRCAQISKAWNILALDGSNWQRV) enclose the F-box domain. LRR repeat units lie at residues 61-87 (QTDVEGRVVENISKRCGGFLRKLSLRG), 88-113 (CIGVGDSSLKTFAQNCRNIEHLNLNG), 114-139 (CTKITDSTCYSLSRFCSKLKHLDLTS), 140-165 (CVSVTNSSLKGISEGCRNLEYLNLSW), 166-191 (CDQITKEGIEALVRGCRGLKALLLRG), 192-217 (CTQLEDEALKHIQNHCHELVSLNLQS), 218-243 (CSRITDDGVVQICRGCHRLQALCLSG), 244-269 (CSNLTDASLTALGLNCPRLQVLEAAR), 270-295 (CSHLTDAGFTLLARNCHELEKMDLEE), 296-321 (CVLITDSTLVQLSIHCPKLQALSLSH), 322-350 (CELITDEGILHLSSSTCGHERLRVLELDN), 351-375 (CLLVTDASLEHLENCRGLERLELYD), and 376-401 (CQQVTRAGIKRMRAQLPHVKVHAYFA). Positions 80–90 (LRKLSLRGCIG) are interaction with Calmodulin. Residue Lys201 forms a Glycyl lysine isopeptide (Lys-Gly) (interchain with G-Cter in ubiquitin) linkage. Thr404 is modified (phosphothreonine; by GSK3-beta). Residue Cys420 is the site of S-geranylgeranyl cysteine attachment. The short motif at 420–423 (CVIL) is the CAAX motif element.

Part of the SCF (SKP1-CUL1-F-box) E3 ubiquitin-protein ligase complex SCF(FBXL2) composed of CUL1, SKP1, RBX1 and FBXL2. Interacts with calmodulin; may antagonize substrate ubiquitination by SCF(FBXL2). May interact with PIK3R1. Interacts with PTPN13. Post-translationally, phosphorylated by GSK-beta (GSK3B), promoting recognition by FBXO3, leading to its ubiquitination by the SCF(FBXO3) complex. Ubiquitinated at Lys-201 by the SCF(FBXO3) complex in response to lipopolysaccharide (LPS), leading to its degradation by the proteasome.

It localises to the membrane. The protein operates within protein modification; protein ubiquitination. In terms of biological role, calcium-activated substrate recognition component of the SCF (SKP1-cullin-F-box protein) E3 ubiquitin-protein ligase complex, SCF(FBXL2), which mediates the ubiquitination and subsequent proteasomal degradation of target proteins. Unlike many F-box proteins, FBXL2 does not seem to target phosphodegron within its substrates but rather calmodulin-binding motifs and is thereby antagonized by calmodulin. This is the case for the cyclins CCND2 and CCND3 which polyubiquitination and subsequent degradation are inhibited by calmodulin. Through CCND2 and CCND3 degradation induces cell-cycle arrest in G(0). SCF(FBXL2) also mediates PIK3R2 ubiquitination and proteasomal degradation thereby regulating phosphatidylinositol 3-kinase signaling and autophagy. PCYT1A monoubiquitination by SCF(FBXL2) and subsequent degradation regulates synthesis of phosphatidylcholine, which is utilized for formation of membranes and of pulmonary surfactant. The SCF(FBXL2) complex acts as a regulator of inflammation by mediating ubiquitination and degradation of TRAF proteins (TRAF1, TRAF2, TRAF3, TRAF4, TRAF5 and TRAF6). The SCF(FBXL2) complex acts as a negative regulator of the NLRP3 inflammasome by mediating ubiquitination and degradation of NLRP3. The protein is F-box/LRR-repeat protein 2 of Mus musculus (Mouse).